Consider the following 409-residue polypeptide: Tyrosine--tRNA ligase (409 aa).

The 'HIGH' region motif lies at 43–52 (PTAPDLHLGH). A 'KMSKS' region motif is present at residues 227 to 231 (KMSKS). Residue Lys230 participates in ATP binding. One can recognise an S4 RNA-binding domain in the interval 338–399 (LALPQLLKLA…GKRKFAKVTL (62 aa)).

The protein belongs to the class-I aminoacyl-tRNA synthetase family. TyrS type 2 subfamily. Homodimer.

The protein resides in the cytoplasm. It carries out the reaction tRNA(Tyr) + L-tyrosine + ATP = L-tyrosyl-tRNA(Tyr) + AMP + diphosphate + H(+). Functionally, catalyzes the attachment of tyrosine to tRNA(Tyr) in a two-step reaction: tyrosine is first activated by ATP to form Tyr-AMP and then transferred to the acceptor end of tRNA(Tyr). The chain is Tyrosine--tRNA ligase from Nitrosomonas europaea (strain ATCC 19718 / CIP 103999 / KCTC 2705 / NBRC 14298).